The chain runs to 118 residues: uncharacterized protein (118 aa).

3 helical membrane passes run 22 to 44 (IIASIVGAVIIAAAISALLFSIA), 54 to 71 (LSPLVYSIVSLAVIPVLR), and 78 to 99 (PILSLLTAFSIPILFLSGVEWL).

It is found in the cell membrane. This is an uncharacterized protein from Archaeoglobus fulgidus (strain ATCC 49558 / DSM 4304 / JCM 9628 / NBRC 100126 / VC-16).